The primary structure comprises 352 residues: tRNA pseudouridine synthase D (352 aa).

Catalysis depends on aspartate 81, which acts as the Nucleophile. Residues 157–303 form the TRUD domain; that stretch reads GVPNYFGTQR…MDHERRILRL (147 aa).

This sequence belongs to the pseudouridine synthase TruD family.

The enzyme catalyses uridine(13) in tRNA = pseudouridine(13) in tRNA. Functionally, responsible for synthesis of pseudouridine from uracil-13 in transfer RNAs. The polypeptide is tRNA pseudouridine synthase D (Pseudomonas putida (strain ATCC 47054 / DSM 6125 / CFBP 8728 / NCIMB 11950 / KT2440)).